The chain runs to 65 residues: Large ribosomal subunit protein uL29 (65 aa).

It belongs to the universal ribosomal protein uL29 family.

In Buchnera aphidicola subsp. Cinara cedri (strain Cc), this protein is Large ribosomal subunit protein uL29.